Here is a 144-residue protein sequence, read N- to C-terminus: Large ribosomal subunit protein uL11 (144 aa).

Belongs to the universal ribosomal protein uL11 family. In terms of assembly, part of the ribosomal stalk of the 50S ribosomal subunit. Interacts with L10 and the large rRNA to form the base of the stalk. L10 forms an elongated spine to which L12 dimers bind in a sequential fashion forming a multimeric L10(L12)X complex. One or more lysine residues are methylated.

Forms part of the ribosomal stalk which helps the ribosome interact with GTP-bound translation factors. The chain is Large ribosomal subunit protein uL11 from Nocardia farcinica (strain IFM 10152).